The sequence spans 686 residues: U3 small nucleolar RNA-associated protein 4 homolog (686 aa).

WD repeat units follow at residues 14–53, 57–96, 99–138, 143–181, 193–231, 234–273, 285–322, 324–359, 435–474, 482–521, and 524–563; these read YVPS…FQEK, GHES…IKYT, AFGG…IQFA, RQKS…IIRK, KSRC…LVKS, VANA…SNSS, HHTH…EVKN, DAAL…ELWR, SFLR…FKHL, GTVE…LHCT, and AYNF…YTEW. K321 is covalently cross-linked (Glycyl lysine isopeptide (Lys-Gly) (interchain with G-Cter in SUMO2)).

As to quaternary structure, interacts with HIVEP1 Interacts with NOL11. Part of the small subunit (SSU) processome, composed of more than 70 proteins and the RNA chaperone small nucleolar RNA (snoRNA) U3. May be a component of the proposed t-UTP subcomplex of the ribosomal small subunit (SSU) processome containing at least UTP4, WDR43, HEATR1, UTP15, WDR75. Post-translationally, may be phosphorylated during mitosis; may control the association of this protein with WRD43 and UTP15. Expressed in liver.

Its subcellular location is the nucleus. The protein localises to the nucleolus. It localises to the chromosome. In terms of biological role, ribosome biogenesis factor. Involved in nucleolar processing of pre-18S ribosomal RNA. Part of the small subunit (SSU) processome, first precursor of the small eukaryotic ribosomal subunit. During the assembly of the SSU processome in the nucleolus, many ribosome biogenesis factors, an RNA chaperone and ribosomal proteins associate with the nascent pre-rRNA and work in concert to generate RNA folding, modifications, rearrangements and cleavage as well as targeted d Involved in SSU pre-rRNA processing at sites A', A0, 1 and 2b. Required for optimal pre-ribosomal RNA transcription by RNA polymerase. May be a transcriptional regulator. The chain is U3 small nucleolar RNA-associated protein 4 homolog (Utp4) from Mus musculus (Mouse).